Here is a 221-residue protein sequence, read N- to C-terminus: Cytidylate kinase 1 (221 aa).

7–15 (GPSASGKSS) is an ATP binding site.

Belongs to the cytidylate kinase family. Type 1 subfamily.

Its subcellular location is the cytoplasm. The enzyme catalyses CMP + ATP = CDP + ADP. It carries out the reaction dCMP + ATP = dCDP + ADP. In Borreliella afzelii (strain PKo) (Borrelia afzelii), this protein is Cytidylate kinase 1.